The chain runs to 107 residues: Ferredoxin-1 (107 aa).

2 4Fe-4S ferredoxin-type domains span residues 2–30 (AFVVTDNCIKCKYTDCVEVCPVDCFYEGP) and 31–60 (NFLVIHPDECIDCALCEPECPAQAIFSEDE). 2 residues coordinate [3Fe-4S] cluster: Cys-9 and Cys-17. [4Fe-4S] cluster is bound by residues Cys-21, Cys-40, Cys-43, and Cys-46. Residue Cys-50 participates in [3Fe-4S] cluster binding. Positions 84–107 (EKKDPLPDAEDWDGVKGKLQHLER) are disordered. Over residues 96-107 (DGVKGKLQHLER) the composition is skewed to basic and acidic residues.

[4Fe-4S] cluster serves as cofactor. [3Fe-4S] cluster is required as a cofactor.

In terms of biological role, ferredoxins are iron-sulfur proteins that transfer electrons in a wide variety of metabolic reactions. This ferredoxin could play a role in regulating gene expression by interacting directly with DNA. The protein is Ferredoxin-1 (fdxA) of Azotobacter vinelandii.